The primary structure comprises 296 residues: MIRALFAAAKKIVIKIGSNTLAQADGTPDEEFLAECARACAALMRDGKQIVVVSSGAQVAGISALHCLSSPPQGAGLERHESRGVIPGDGASCKQALCAVGQAELISRWRSAFAAHQQCVGQFLCTKEDFTDSDRAAQVRYTLSFLLERRVVPILNENDALCCSDVPSVPADRRVSLSPQKRIGDNDSLSAFVALLWQADLLLLLSDIDGVYDKDPKAHTDAQHVPLVTDVSALVGKTSMGSSNVFGTGGIATKLDAARLVTRAGIPLVLANGRHLDPILSLMRGDARGTLFVPVS.

ATP is bound at residue Lys-15. Ser-55, Asp-159, and Asn-186 together coordinate substrate. Residues 206 to 207 (SD) and 248 to 254 (TGGIATK) contribute to the ATP site.

The protein belongs to the glutamate 5-kinase family.

The protein localises to the cytoplasm. It catalyses the reaction L-glutamate + ATP = L-glutamyl 5-phosphate + ADP. It participates in amino-acid biosynthesis; L-proline biosynthesis; L-glutamate 5-semialdehyde from L-glutamate: step 1/2. Its function is as follows. Catalyzes the transfer of a phosphate group to glutamate to form L-glutamate 5-phosphate. This is Glutamate 5-kinase from Treponema pallidum (strain Nichols).